A 272-amino-acid chain; its full sequence is Phosphoglycolate phosphatase (272 aa).

D19 serves as the catalytic Nucleophile. Positions 19, 21, and 182 each coordinate Mg(2+).

This sequence belongs to the HAD-like hydrolase superfamily. CbbY/CbbZ/Gph/YieH family. It depends on Mg(2+) as a cofactor.

It catalyses the reaction 2-phosphoglycolate + H2O = glycolate + phosphate. Its pathway is organic acid metabolism; glycolate biosynthesis; glycolate from 2-phosphoglycolate: step 1/1. Specifically catalyzes the dephosphorylation of 2-phosphoglycolate. Is involved in the dissimilation of the intracellular 2-phosphoglycolate formed during the DNA repair of 3'-phosphoglycolate ends, a major class of DNA lesions induced by oxidative stress. The protein is Phosphoglycolate phosphatase of Pseudomonas fluorescens (strain ATCC BAA-477 / NRRL B-23932 / Pf-5).